Consider the following 379-residue polypeptide: Putative clathrin assembly protein At1g68110 (379 aa).

The 133-residue stretch at Asn-26 to Leu-158 folds into the ENTH domain.

It is found in the membrane. Its subcellular location is the clathrin-coated pit. The protein resides in the golgi apparatus. It localises to the cytoplasmic vesicle. The protein localises to the clathrin-coated vesicle. The chain is Putative clathrin assembly protein At1g68110 from Arabidopsis thaliana (Mouse-ear cress).